A 587-amino-acid chain; its full sequence is 2-succinyl-5-enolpyruvyl-6-hydroxy-3-cyclohexene-1-carboxylate synthase (587 aa).

This sequence belongs to the TPP enzyme family. MenD subfamily. In terms of assembly, homodimer. Mg(2+) serves as cofactor. The cofactor is Mn(2+). Thiamine diphosphate is required as a cofactor.

It carries out the reaction isochorismate + 2-oxoglutarate + H(+) = 5-enolpyruvoyl-6-hydroxy-2-succinyl-cyclohex-3-ene-1-carboxylate + CO2. Its pathway is quinol/quinone metabolism; 1,4-dihydroxy-2-naphthoate biosynthesis; 1,4-dihydroxy-2-naphthoate from chorismate: step 2/7. The protein operates within cofactor biosynthesis; phylloquinone biosynthesis. In terms of biological role, catalyzes the thiamine diphosphate-dependent decarboxylation of 2-oxoglutarate and the subsequent addition of the resulting succinic semialdehyde-thiamine pyrophosphate anion to isochorismate to yield 2-succinyl-5-enolpyruvyl-6-hydroxy-3-cyclohexene-1-carboxylate (SEPHCHC). The sequence is that of 2-succinyl-5-enolpyruvyl-6-hydroxy-3-cyclohexene-1-carboxylate synthase from Prochlorococcus marinus (strain MIT 9312).